Here is a 597-residue protein sequence, read N- to C-terminus: Translation initiation factor IF-2 (597 aa).

2 stretches are compositionally biased toward low complexity: residues 57 to 73 (GGDA…AATA) and 81 to 95 (TPAA…PASD). The disordered stretch occupies residues 57 to 96 (GGDAAPAAASAPAAATAEPEEADETPAAAAQADAEPASDL). The tr-type G domain maps to 98–271 (HRAPVVTIMG…ELEDLRADPK (174 aa)). The interval 107 to 114 (GHVDHGKT) is G1. GTP is bound at residue 107–114 (GHVDHGKT). Positions 132–136 (GITQH) are G2. Positions 153-156 (DTPG) are G3. GTP is bound by residues 153–157 (DTPGH) and 207–210 (NKVD). Residues 207–210 (NKVD) form a G4 region. The segment at 243 to 245 (SAK) is G5.

It belongs to the TRAFAC class translation factor GTPase superfamily. Classic translation factor GTPase family. IF-2 subfamily.

Its subcellular location is the cytoplasm. Functionally, one of the essential components for the initiation of protein synthesis. Protects formylmethionyl-tRNA from spontaneous hydrolysis and promotes its binding to the 30S ribosomal subunits. Also involved in the hydrolysis of GTP during the formation of the 70S ribosomal complex. This Deinococcus radiodurans (strain ATCC 13939 / DSM 20539 / JCM 16871 / CCUG 27074 / LMG 4051 / NBRC 15346 / NCIMB 9279 / VKM B-1422 / R1) protein is Translation initiation factor IF-2.